A 209-amino-acid polypeptide reads, in one-letter code: Ras-like protein (209 aa).

GTP is bound at residue 10–17; the sequence is GGGLVGKS. The Effector region motif lies at 55-63; sequence YDPTVEDSR. Residue Thr58 is modified to Phosphothreonine. GTP contacts are provided by residues 79–83 and 140–143; these read DTAGQ and NKAD. Cys206 carries the post-translational modification Cysteine methyl ester. A lipid anchor (S-geranylgeranyl cysteine) is attached at Cys206. A propeptide spans 207–209 (removed in mature form); sequence LII.

Belongs to the small GTPase superfamily. Ras family. In terms of processing, phosphorylated in the presence of insulin.

It localises to the cell membrane. It carries out the reaction GTP + H2O = GDP + phosphate + H(+). Alternates between an inactive form bound to GDP and an active form bound to GTP. Activated by a guanine nucleotide-exchange factor (GEF) and inactivated by a GTPase-activating protein (GAP). Functionally, this protein is activated by the insulin/insulin (insulin-like)-receptor system. This transition enables the ras protein to interact with the lectin-receptor/lectin complex, a process which ultimately lead to an initiation of an intra-cellular signal-transduction chain. The chain is Ras-like protein from Geodia cydonium (Sponge).